Reading from the N-terminus, the 335-residue chain is tRNA N6-adenosine threonylcarbamoyltransferase (335 aa).

Residues His-109, His-113, and Tyr-130 each coordinate a divalent metal cation. Substrate is bound by residues 130–134 (YVSGG), Asp-162, Gly-177, Glu-181, and Asn-266. Asp-294 lines the a divalent metal cation pocket.

This sequence belongs to the KAE1 / TsaD family. Component of the EKC/KEOPS complex composed of at least tp53rk, tprkb, osgep and lage3; the whole complex dimerizes. A divalent metal cation serves as cofactor.

The protein resides in the cytoplasm. Its subcellular location is the nucleus. It carries out the reaction L-threonylcarbamoyladenylate + adenosine(37) in tRNA = N(6)-L-threonylcarbamoyladenosine(37) in tRNA + AMP + H(+). In terms of biological role, component of the EKC/KEOPS complex that is required for the formation of a threonylcarbamoyl group on adenosine at position 37 (t(6)A37) in tRNAs that read codons beginning with adenine. The complex is probably involved in the transfer of the threonylcarbamoyl moiety of threonylcarbamoyl-AMP (TC-AMP) to the N6 group of A37. Osgep likely plays a direct catalytic role in this reaction, but requires other protein(s) of the complex to fulfill this activity. The sequence is that of tRNA N6-adenosine threonylcarbamoyltransferase from Xenopus laevis (African clawed frog).